A 314-amino-acid chain; its full sequence is 2,3-dihydroxyphenylpropionate/2,3-dihydroxicinnamic acid 1,2-dioxygenase (314 aa).

The active-site Proton donor is the His115. His179 serves as the catalytic Proton acceptor.

This sequence belongs to the LigB/MhpB extradiol dioxygenase family. Homotetramer. Requires Fe(2+) as cofactor.

It carries out the reaction 3-(2,3-dihydroxyphenyl)propanoate + O2 = (2Z,4E)-2-hydroxy-6-oxonona-2,4-dienedioate + H(+). The catalysed reaction is (2E)-3-(2,3-dihydroxyphenyl)prop-2-enoate + O2 = (2Z,4E,7E)-2-hydroxy-6-oxonona-2,4,7-trienedioate + H(+). It participates in aromatic compound metabolism; 3-phenylpropanoate degradation. In terms of biological role, catalyzes the non-heme iron(II)-dependent oxidative cleavage of 2,3-dihydroxyphenylpropionic acid and 2,3-dihydroxicinnamic acid into 2-hydroxy-6-ketononadienedioate and 2-hydroxy-6-ketononatrienedioate, respectively. This chain is 2,3-dihydroxyphenylpropionate/2,3-dihydroxicinnamic acid 1,2-dioxygenase, found in Rhodococcus jostii (strain RHA1).